A 304-amino-acid polypeptide reads, in one-letter code: Murein tetrapeptide carboxypeptidase (304 aa).

Ser-106 functions as the Nucleophile in the catalytic mechanism. Active-site charge relay system residues include Glu-200 and His-270.

It belongs to the peptidase S66 family.

The protein resides in the cytoplasm. The catalysed reaction is N-acetyl-D-glucosaminyl-N-acetylmuramoyl-L-alanyl-meso-2,6-diaminoheptanedioyl-D-alanine + H2O = N-acetyl-D-glucosaminyl-N-acetylmuramoyl-L-alanyl-meso-2,6-diaminoheptanedioate + D-alanine. It participates in cell wall biogenesis; peptidoglycan recycling. With respect to regulation, inhibited by beta-lactams containing a D-amino acid side chain. Functionally, releases the terminal D-alanine residue from the cytoplasmic tetrapeptide recycling product L-Ala-gamma-D-Glu-meso-Dap-D-Ala. To a lesser extent, can also cleave D-Ala from murein derivatives containing the tetrapeptide, i.e. MurNAc-tetrapeptide, UDP-MurNAc-tetrapeptide, GlcNAc-MurNAc-tetrapeptide, and GlcNAc-anhMurNAc-tetrapeptide. Does not act on murein sacculi or cross-linked muropeptides. The tripeptides produced by the LcdA reaction can then be reused as peptidoglycan building blocks; LcdA is thereby involved in murein recycling. Is also essential for viability during stationary phase. The sequence is that of Murein tetrapeptide carboxypeptidase (ldcA) from Escherichia coli (strain K12).